Here is a 469-residue protein sequence, read N- to C-terminus: Zinc finger and BTB domain-containing protein 8A.1-B (469 aa).

Residues 24–92 (CDCHIIVEGQ…VYSGKLPLSG (69 aa)) form the BTB domain. 2 C2H2-type zinc fingers span residues 315–337 (FKCPFCTHTVKRKADLKRHLRCH) and 343–366 (YPCEACGKRFTRLEHLRNHFQTIH).

It localises to the nucleus. In terms of biological role, may be involved in transcriptional regulation. The polypeptide is Zinc finger and BTB domain-containing protein 8A.1-B (zbtb8a.1-b) (Xenopus laevis (African clawed frog)).